We begin with the raw amino-acid sequence, 310 residues long: MDKIFVDEAVNELHTIQDMLRWTVSRFNAANIFYGHGTDNPWDEAVQLVFPSLFLPLDIPEDIRSSRLTSSERHRIVERVIRRVNERIPVAYLTNKAWFCGMEYYVDERVLVPRSPIGELIENRFDGLIHHQPNHILDMCTGSGCIAIACAYAFPDAEVDAVDISNDVLAVTEHNIQQHGMEHQVTPIRSDLFRDLPPIKYDLIVTNPPYVDAEDMADLPQEFRFEPELGLAAGSDGLKLARRILACAPDFLQDDGVLICEVGNSMVHLMDQYPDVPFTWLEFEKGGDGVFMLTKQQLIDCAAHFSMYRD.

Belongs to the protein N5-glutamine methyltransferase family. PrmB subfamily.

The enzyme catalyses L-glutaminyl-[ribosomal protein uL3] + S-adenosyl-L-methionine = N(5)-methyl-L-glutaminyl-[ribosomal protein uL3] + S-adenosyl-L-homocysteine + H(+). Methylates large ribosomal subunit protein uL3 on a specific glutamine residue. The chain is Ribosomal protein uL3 glutamine methyltransferase from Yersinia pestis.